Consider the following 366-residue polypeptide: 3-dehydroquinate synthase (366 aa).

NAD(+)-binding positions include 74–79 (SGEAAK), 108–112 (GVVGD), 132–133 (TT), Lys-144, Lys-153, and 171–174 (FLRT). Residues Glu-186, His-249, and His-266 each contribute to the Zn(2+) site.

This sequence belongs to the sugar phosphate cyclases superfamily. Dehydroquinate synthase family. Requires Co(2+) as cofactor. Zn(2+) is required as a cofactor. The cofactor is NAD(+).

The protein localises to the cytoplasm. It carries out the reaction 7-phospho-2-dehydro-3-deoxy-D-arabino-heptonate = 3-dehydroquinate + phosphate. The protein operates within metabolic intermediate biosynthesis; chorismate biosynthesis; chorismate from D-erythrose 4-phosphate and phosphoenolpyruvate: step 2/7. Catalyzes the conversion of 3-deoxy-D-arabino-heptulosonate 7-phosphate (DAHP) to dehydroquinate (DHQ). This chain is 3-dehydroquinate synthase, found in Geobacillus kaustophilus (strain HTA426).